A 427-amino-acid chain; its full sequence is 3-phosphoshikimate 1-carboxyvinyltransferase (427 aa).

3 residues coordinate 3-phosphoshikimate: Lys-22, Ser-23, and Arg-27. Lys-22 provides a ligand contact to phosphoenolpyruvate. The phosphoenolpyruvate site is built by Gly-96 and Arg-124. 3-phosphoshikimate contacts are provided by Ser-169, Ser-170, Gln-171, Ser-197, Asp-313, Asn-336, and Lys-340. Residue Gln-171 participates in phosphoenolpyruvate binding. Asp-313 functions as the Proton acceptor in the catalytic mechanism. Phosphoenolpyruvate-binding residues include Arg-344, Arg-386, and Lys-411.

This sequence belongs to the EPSP synthase family. As to quaternary structure, monomer.

The protein localises to the cytoplasm. It carries out the reaction 3-phosphoshikimate + phosphoenolpyruvate = 5-O-(1-carboxyvinyl)-3-phosphoshikimate + phosphate. The protein operates within metabolic intermediate biosynthesis; chorismate biosynthesis; chorismate from D-erythrose 4-phosphate and phosphoenolpyruvate: step 6/7. Its function is as follows. Catalyzes the transfer of the enolpyruvyl moiety of phosphoenolpyruvate (PEP) to the 5-hydroxyl of shikimate-3-phosphate (S3P) to produce enolpyruvyl shikimate-3-phosphate and inorganic phosphate. The chain is 3-phosphoshikimate 1-carboxyvinyltransferase from Salmonella heidelberg (strain SL476).